The chain runs to 1634 residues: Leucine-rich repeat-containing protein 37A3 (1634 aa).

Positions 1–35 (MTSAQCPALACVMSPLRFWGPWPLLMWQLLWLLVK) are cleaved as a signal peptide. The Extracellular segment spans residues 36-1581 (EAQPLEWVKD…ELPGYGYTKK (1546 aa)). 5 disordered regions span residues 53 to 104 (PLGP…ESTE), 129 to 154 (SQQD…KKDP), 172 to 531 (TPQS…VVVA), 619 to 642 (PEPT…KHPE), and 758 to 777 (EPTT…APRP). An LRR 1 repeat occupies 137–160 (LSPQERLPVSPKKLKKDPAQRWSL). Composition is skewed to polar residues over residues 172–189 (TPQS…STDT) and 223–237 (ETQN…QSSS). LRR repeat units follow at residues 230–253 (LEDI…LEEE) and 267–290 (ESSM…EDQA). A compositionally biased stretch (low complexity) spans 238–249 (LQQEAPAQLPQL). Residue asparagine 296 is glycosylated (N-linked (GlcNAc...) asparagine). Polar residues predominate over residues 307–326 (TITSEPTNETESSQAQQETP). The span at 358 to 368 (SEQQQPVQPSE) shows a compositional bias: low complexity. A compositionally biased stretch (polar residues) spans 433-446 (LVHQEATTRLSGSG). Residues 482–493 (SPEPINNENPSP) show a composition bias toward low complexity. Positions 760–770 (TTETGHSTALE) are enriched in polar residues. 6 LRR repeats span residues 864-887 (NGTF…VWKA), 888-911 (YSWT…SFEG), 912-935 (LLSL…TFEP), 937-959 (PFLK…TFQA), 963-987 (MQFL…LFKL), and 1002-1027 (LTTL…MACC). Asparagine 1079 carries an N-linked (GlcNAc...) asparagine glycan. LRR repeat units follow at residues 1124 to 1146 (LPYF…KLPT) and 1151 to 1176 (LAKI…SIQK). Composition is skewed to basic and acidic residues over residues 1181 to 1191 (EVGRQSIRREQ) and 1201 to 1216 (AEEK…ELKQ). Disordered regions lie at residues 1181–1227 (EVGR…EKLA) and 1306–1329 (RFHK…KVRK). The LRR 12 repeat unit spans residues 1359–1384 (FSSLRDLSPQENPFLEVSAPSEHFIE). A helical membrane pass occupies residues 1582–1602 (LILALIVTGILTILIILLCLI). Topologically, residues 1603–1634 (EICCHRRSLQEDEEGFSRDSEAPTEEESEALP) are cytoplasmic. Residues 1614 to 1634 (DEEGFSRDSEAPTEEESEALP) form a disordered region. The segment covering 1624–1634 (APTEEESEALP) has biased composition (acidic residues).

Belongs to the LRRC37A family.

Its subcellular location is the membrane. This is Leucine-rich repeat-containing protein 37A3 (LRRC37A3) from Homo sapiens (Human).